We begin with the raw amino-acid sequence, 324 residues long: o-succinylbenzoate synthase (324 aa).

Catalysis depends on Lys-135, which acts as the Proton donor. The Mg(2+) site is built by Asp-163, Glu-192, and Asp-215. Lys-237 (proton acceptor) is an active-site residue.

The protein belongs to the mandelate racemase/muconate lactonizing enzyme family. MenC type 1 subfamily. A divalent metal cation is required as a cofactor.

It catalyses the reaction (1R,6R)-6-hydroxy-2-succinyl-cyclohexa-2,4-diene-1-carboxylate = 2-succinylbenzoate + H2O. Its pathway is quinol/quinone metabolism; 1,4-dihydroxy-2-naphthoate biosynthesis; 1,4-dihydroxy-2-naphthoate from chorismate: step 4/7. It functions in the pathway quinol/quinone metabolism; menaquinone biosynthesis. Its function is as follows. Converts 2-succinyl-6-hydroxy-2,4-cyclohexadiene-1-carboxylate (SHCHC) to 2-succinylbenzoate (OSB). The polypeptide is o-succinylbenzoate synthase (Aliivibrio fischeri (strain ATCC 700601 / ES114) (Vibrio fischeri)).